Reading from the N-terminus, the 221-residue chain is UPF0502 protein VSAL_II0605 (221 aa).

The protein belongs to the UPF0502 family.

The chain is UPF0502 protein VSAL_II0605 from Aliivibrio salmonicida (strain LFI1238) (Vibrio salmonicida (strain LFI1238)).